The sequence spans 1091 residues: Multiple epidermal growth factor-like domains protein 11 (1091 aa).

An N-terminal signal peptide occupies residues 1–18 (MAPSAVGLLVFLLQAALA). The Extracellular segment spans residues 19 to 847 (LNPEDPNVCS…SPALGAERHS (829 aa)). An EMI domain is found at 23-100 (DPNVCSHWES…YYENGDFCIP (78 aa)). Disulfide bonds link cysteine 27–cysteine 88, cysteine 53–cysteine 62, cysteine 87–cysteine 98, cysteine 102–cysteine 117, cysteine 119–cysteine 128, cysteine 145–cysteine 153, cysteine 147–cysteine 160, cysteine 162–cysteine 171, cysteine 184–cysteine 196, cysteine 190–cysteine 203, cysteine 205–cysteine 214, cysteine 227–cysteine 239, cysteine 233–cysteine 246, and cysteine 248–cysteine 257. EGF-like domains follow at residues 94–129 (NGDFCIPLCTEECMHGRCVSPDTCHCEPGWGGPDCS), 142–172 (SNRCQCQNGALCNPITGACVCAPGFRGWRCE), 180–215 (HGKGCQLLCQCHHGASCDPRTGECLCAPGYTGVYCE), 223–258 (HGAHCELRCPCQNGGTCHHITGECACPPGWTGAVCA), 266–301 (FGQNCSQDCPCHHGGQCDHVTGQCHCTAGYMGDRCQ), 314–344 (SQRCDCHNGGQCSPATGACECEPGYKGPSCQ), 398–433 (YGNGCQLPCTCQNGADCHSITGSCTCAPGFMGEVCA), 441–476 (YGPNCSSVCSCSNGGTCSPVDGSCTCREGWQGLDCS), and 484–519 (WGLNCNETCICANGAACSPFDGSCACTPGWLGDSCE). Residue asparagine 269 is glycosylated (N-linked (GlcNAc...) asparagine). Cystine bridges form between cysteine 270-cysteine 282, cysteine 276-cysteine 289, cysteine 291-cysteine 300, cysteine 317-cysteine 325, cysteine 319-cysteine 332, cysteine 334-cysteine 343, cysteine 402-cysteine 414, cysteine 408-cysteine 421, cysteine 423-cysteine 432, cysteine 445-cysteine 457, cysteine 451-cysteine 464, cysteine 466-cysteine 475, cysteine 488-cysteine 500, cysteine 494-cysteine 507, and cysteine 509-cysteine 518. Asparagine 530 is a glycosylation site (N-linked (GlcNAc...) asparagine). 6 consecutive EGF-like domains span residues 570-605 (WGPNCSVSCSCENGGSCSPEDGSCECAPGFRGPLCQ), 613-650 (YGHGCAQPCPLCVHSRGPCHHISGICECLPGFSGALCN), 658-693 (FGQDCAQLCSCANNGTCSPIDGSCQCFPGWIGKDCS), 706-736 (FHTCSCHNGASCSAEDGACHCTPGWTGLFCT), 749-779 (GHICQCQNGASCDHITGKCTCRTGFSGRHCE), and 787-822 (FGYGCQQLCECMNNATCDHVTGTCYCSPGFKGIRCD). 18 cysteine pairs are disulfide-bonded: cysteine 574–cysteine 586, cysteine 580–cysteine 593, cysteine 595–cysteine 604, cysteine 617–cysteine 631, cysteine 621–cysteine 638, cysteine 640–cysteine 649, cysteine 662–cysteine 674, cysteine 668–cysteine 681, cysteine 683–cysteine 692, cysteine 709–cysteine 717, cysteine 711–cysteine 724, cysteine 726–cysteine 735, cysteine 752–cysteine 760, cysteine 754–cysteine 767, cysteine 769–cysteine 778, cysteine 791–cysteine 803, cysteine 797–cysteine 810, and cysteine 812–cysteine 821. Residues 848-868 (VGAVTGIVLLLFLVVVLLGLF) traverse the membrane as a helical segment. At 869–1091 (AWRRRRQKEK…NIYEVGRCLT (223 aa)) the chain is on the cytoplasmic side.

This sequence belongs to the MEGF family. As to quaternary structure, homomer. Does not interact with MEGF10.

Its subcellular location is the cell membrane. The protein localises to the basolateral cell membrane. Its function is as follows. May regulate the mosaic spacing of specific neuron subtypes in the retina through homotypic retinal neuron repulsion. Mosaics provide a mechanism to distribute each cell type evenly across the retina, ensuring that all parts of the visual field have access to a full set of processing elements. This chain is Multiple epidermal growth factor-like domains protein 11 (Megf11), found in Mus musculus (Mouse).